We begin with the raw amino-acid sequence, 528 residues long: MSPERSASLEPDEHSSLLSDTASYISRDDLEDSKAKQIPTPIPKKQLGVLFSIRFTEPIIYSHLWPYINQFVNDIGVADGNPRYVGFYSGLIESVFACGEVCSIFMLSRLSDRIGRRPVLLPSALGVALFTALFGLSTSFTMMLVLRVCAGLLAGATPIVHSVVSELTDETNNALVVPLYGLITPIGFAIGPLIGGTLEHAATKYPNVFGYDFLRKYPYFLPSFVPCCLAVVGVTFGYFFLQETLPSIVRAKKRLERQKSTSSISSRTSTLYGATDDHNRDASESTALSPEEAEDEIDSKPQSIKALIVDPSMRAIMGSGTFLMFLYTSSDVLFSLYCFTAVEDGGVGLPPDEIGYAFSVAGVIAMLMQLCITPWVLRTFDKAKVYKFCMFSFPLVFALMGCLNPLAQTGYNEVSKTIHPTTTGLLYAAIAVLLLLARVCVMAFPISMMLIKQNADKNSLATANGLVQVSMTIARALCPTVSSSLFAYSTSNNILGGHLWVLIMVTISLAGVWQSMSIARVTKRKEEL.

The tract at residues 1–20 is disordered; the sequence is MSPERSASLEPDEHSSLLSD. The next 5 membrane-spanning stretches (helical) occupy residues 87-107, 125-145, 148-168, 174-194, and 220-240; these read FYSG…IFML, LGVA…MMLV, VCAG…SELT, ALVV…GPLI, and FLPS…GYFF. A compositionally biased stretch (low complexity) spans 260–270; sequence STSSISSRTST. Residues 260–299 form a disordered region; sequence STSSISSRTSTLYGATDDHNRDASESTALSPEEAEDEIDS. 6 consecutive transmembrane segments (helical) span residues 322–342, 357–377, 388–408, 424–444, 460–479, and 493–513; these read FLMF…FTAV, AFSV…PWVL, FCMF…PLAQ, GLLY…VMAF, LATA…ALCP, and NILG…AGVW.

The protein belongs to the major facilitator superfamily. TCR/Tet family.

Its subcellular location is the membrane. In terms of biological role, major facilitator-type transporter; part of the gene cluster that mediates the biosynthesis of psilocybin, a psychotropic tryptamine-derived natural product. The sequence is that of Major facilitator-type transporter psiT2 from Psilocybe cyanescens.